The chain runs to 436 residues: Nucleolar protein 4-like (436 aa).

The segment at Met-1–Pro-184 is disordered. Positions Ser-41–Gln-61 are enriched in low complexity. Residue Ser-130 is modified to Phosphoserine. Residues Ala-160–Asp-169 are compositionally biased toward acidic residues. The span at His-170–Pro-184 shows a compositional bias: basic and acidic residues. Ser-295 carries the post-translational modification Phosphoserine. Residues Gln-351 to Thr-366 are compositionally biased toward polar residues. A disordered region spans residues Gln-351–Ser-400. Residues Ser-375–Thr-396 show a composition bias toward low complexity.

This Pongo abelii (Sumatran orangutan) protein is Nucleolar protein 4-like (NOL4L).